We begin with the raw amino-acid sequence, 506 residues long: Methylthioalkylmalate synthase 1, chloroplastic (506 aa).

Residues 1 to 49 constitute a chloroplast transit peptide; sequence MASSLLTSSVMIPTTGSTVVGRSVLPFQSSLHSLRLTHSYKNPALFISC. Residues 85–359 form the Pyruvate carboxyltransferase domain; it reads VRVFDTTLRD…YTKIDTRQIM (275 aa). S98 is subject to Phosphoserine.

This sequence belongs to the alpha-IPM synthase/homocitrate synthase family. Monomer. Requires Mn(2+) as cofactor. Highly expressed in leaves, flowers, roots and siliques. Not detected in flowers in PubMed:12432038.

The protein resides in the plastid. It localises to the chloroplast. The enzyme catalyses an omega-(methylsulfanyl)-2-oxoalkanoate + acetyl-CoA + H2O = a 2-(omega-methylsulfanyl)alkylmalate + CoA + H(+). 1 mM DTT required for activity. Activated by ATP and inhibited by iodoacetamide. Its function is as follows. Determines the side chain length of aliphatic glucosinolate structures. Catalyzes exclusively the condensation reactions of both the first and second methionine carbon chain elongation. The chain is Methylthioalkylmalate synthase 1, chloroplastic (MAM1) from Arabidopsis thaliana (Mouse-ear cress).